Here is a 242-residue protein sequence, read N- to C-terminus: 3-deoxy-manno-octulosonate cytidylyltransferase (242 aa).

This sequence belongs to the KdsB family.

Its subcellular location is the cytoplasm. The catalysed reaction is 3-deoxy-alpha-D-manno-oct-2-ulosonate + CTP = CMP-3-deoxy-beta-D-manno-octulosonate + diphosphate. It functions in the pathway nucleotide-sugar biosynthesis; CMP-3-deoxy-D-manno-octulosonate biosynthesis; CMP-3-deoxy-D-manno-octulosonate from 3-deoxy-D-manno-octulosonate and CTP: step 1/1. It participates in bacterial outer membrane biogenesis; lipopolysaccharide biosynthesis. In terms of biological role, activates KDO (a required 8-carbon sugar) for incorporation into bacterial lipopolysaccharide in Gram-negative bacteria. This is 3-deoxy-manno-octulosonate cytidylyltransferase from Mesorhizobium japonicum (strain LMG 29417 / CECT 9101 / MAFF 303099) (Mesorhizobium loti (strain MAFF 303099)).